Reading from the N-terminus, the 567-residue chain is Low-affinity glucose transporter HXT3 (567 aa).

The segment covering 1-29 (MNSTPDLISPQKSSENSNADLPSNSSQVM) has biased composition (polar residues). The segment at 1 to 30 (MNSTPDLISPQKSSENSNADLPSNSSQVMN) is disordered. Residues 1–57 (MNSTPDLISPQKSSENSNADLPSNSSQVMNMPEEKGVQDDFQAEADQVLTNPNTGKG) are Cytoplasmic-facing. Serine 23 bears the Phosphoserine mark. The helical transmembrane segment at 58–78 (AYVTVSICCVMVAFGGFVFGW) threads the bilayer. Topologically, residues 79 to 113 (DTGTISGFVAQTDFLRRFGMKHKDGSYYLSKVRTG) are extracellular. The chain crosses the membrane as a helical span at residues 114 to 134 (LIVSIFNIGCAIGGIILAKLG). The Cytoplasmic segment spans residues 135 to 140 (DMYGRK). A helical transmembrane segment spans residues 141 to 161 (MGLIVVVVIYIIGIIIQIASI). Topologically, residues 162–171 (NKWYQYFIGR) are extracellular. Residues 172–192 (IISGLGVGGIAVLSPMLISEV) form a helical membrane-spanning segment. Topologically, residues 193–198 (APKEMR) are cytoplasmic. Residues 199–219 (GTLVSCYQLMITLGIFLGYCT) form a helical membrane-spanning segment. Over 220 to 233 (NFGTKNYSNSVQWR) the chain is Extracellular. A glycan (N-linked (GlcNAc...) asparagine) is linked at asparagine 225. Residues 234–254 (VPLGLCFAWALFMIGGMTFVP) traverse the membrane as a helical segment. The Cytoplasmic segment spans residues 255–337 (ESPRYLVEAG…IQSLQQLTGD (83 aa)). Residues 338–354 (NYFFYYGTTVFNAVGMS) traverse the membrane as a helical segment. Residues 355–360 (DSFETS) are Extracellular-facing. A helical membrane pass occupies residues 361–378 (IVFGVVNFFSTCCSLYTV). Over 379–385 (DRFGRRN) the chain is Cytoplasmic. A helical membrane pass occupies residues 386–406 (CLLYGAIGMVCCYVVYASVGV). Residues 407-428 (TRLWPNGEGNGSSKGAGNCMIV) are Extracellular-facing. Residue asparagine 416 is glycosylated (N-linked (GlcNAc...) asparagine). A helical transmembrane segment spans residues 429-449 (FACFYIFCFATTWAPIAYVVI). Residues 450–466 (SETFPLRVKSKAMSIAT) lie on the Cytoplasmic side of the membrane. Residues 467-487 (AANWLWGFLIGFFTPFITGAI) traverse the membrane as a helical segment. A topological domain (extracellular) is located at residue asparagine 488. The helical transmembrane segment at 489–509 (FYYGYVFMGCMVFAYFYVFFF) threads the bilayer. Residues 510–567 (VPETKGLTLEEVNDMYAEGVLPWKSASWVPTSQRGANYDADALMHDDQPFYKKMFGKK) lie on the Cytoplasmic side of the membrane.

The protein belongs to the major facilitator superfamily. Sugar transporter (TC 2.A.1.1) family.

It localises to the membrane. Low-affinity glucose transporter. The chain is Low-affinity glucose transporter HXT3 (HXT3) from Saccharomyces cerevisiae (strain ATCC 204508 / S288c) (Baker's yeast).